The primary structure comprises 602 residues: UvrABC system protein C (602 aa).

Residues 15–92 enclose the GIY-YIG domain; it reads DLPGSYQMKD…IQKYQPYYNI (78 aa). The UVR domain maps to 197–232; the sequence is GKAKASLTAKMERAAKNLQFERAAEIRDQLHYIEQT.

It belongs to the UvrC family. Interacts with UvrB in an incision complex.

It localises to the cytoplasm. In terms of biological role, the UvrABC repair system catalyzes the recognition and processing of DNA lesions. UvrC both incises the 5' and 3' sides of the lesion. The N-terminal half is responsible for the 3' incision and the C-terminal half is responsible for the 5' incision. The protein is UvrABC system protein C of Lacticaseibacillus paracasei (strain ATCC 334 / BCRC 17002 / CCUG 31169 / CIP 107868 / KCTC 3260 / NRRL B-441) (Lactobacillus paracasei).